A 132-amino-acid chain; its full sequence is Small ribosomal subunit protein uS8 (132 aa).

The protein belongs to the universal ribosomal protein uS8 family. As to quaternary structure, part of the 30S ribosomal subunit. Contacts proteins S5 and S12.

Functionally, one of the primary rRNA binding proteins, it binds directly to 16S rRNA central domain where it helps coordinate assembly of the platform of the 30S subunit. In Streptococcus agalactiae serotype V (strain ATCC BAA-611 / 2603 V/R), this protein is Small ribosomal subunit protein uS8.